The sequence spans 341 residues: Cytochrome c biogenesis protein CcsA (341 aa).

Helical transmembrane passes span 16–36 (LILLLTMLIYWAGAAFPGMSI), 37–57 (LPTLGTAGVAIANLSIATLLG), 68–88 (LSNLYESLFFLAWGVTAVHLI), 97–117 (LVGVVTTPVAMGITAFAALSL), 142–162 (VMMLSYATLMVGAVLAIAFLI), 249–269 (IIGLGFPLLTIGIIAGAVWAN), 276–296 (WSWDPKETWALITWLVFAAYL), and 310–330 (AILAASGFIVVWVCYLGVNLL).

This sequence belongs to the CcmF/CycK/Ccl1/NrfE/CcsA family. In terms of assembly, may interact with ccs1.

It is found in the cellular thylakoid membrane. In terms of biological role, required during biogenesis of c-type cytochromes (cytochrome c6 and cytochrome f) at the step of heme attachment. This Rippkaea orientalis (strain PCC 8801 / RF-1) (Cyanothece sp. (strain PCC 8801)) protein is Cytochrome c biogenesis protein CcsA.